The sequence spans 189 residues: Glucose-6-phosphate isomerase (189 aa).

Fe cation contacts are provided by H88, H90, E97, and H136.

This sequence belongs to the archaeal-type GPI family. As to quaternary structure, homodimer. The cofactor is Fe cation.

It is found in the cytoplasm. The enzyme catalyses alpha-D-glucose 6-phosphate = beta-D-fructose 6-phosphate. The protein operates within carbohydrate degradation; glycolysis; D-glyceraldehyde 3-phosphate and glycerone phosphate from D-glucose: step 2/4. The sequence is that of Glucose-6-phosphate isomerase (pgiA) from Pyrococcus horikoshii (strain ATCC 700860 / DSM 12428 / JCM 9974 / NBRC 100139 / OT-3).